A 157-amino-acid polypeptide reads, in one-letter code: Protein Smg (157 aa).

Belongs to the Smg family.

In Escherichia coli O8 (strain IAI1), this protein is Protein Smg.